Here is a 506-residue protein sequence, read N- to C-terminus: 2-isopropylmalate synthase (506 aa).

Residues 4-266 (ILFMDTTLRD…EPSITLKEIK (263 aa)) enclose the Pyruvate carboxyltransferase domain. Mn(2+) contacts are provided by aspartate 13, histidine 201, histidine 203, and asparagine 237. Residues 390-506 (NITQLQVHFV…KLKSFIQLVK (117 aa)) form a regulatory domain region.

This sequence belongs to the alpha-IPM synthase/homocitrate synthase family. LeuA type 1 subfamily. As to quaternary structure, homodimer. Mn(2+) serves as cofactor.

It localises to the cytoplasm. It carries out the reaction 3-methyl-2-oxobutanoate + acetyl-CoA + H2O = (2S)-2-isopropylmalate + CoA + H(+). The protein operates within amino-acid biosynthesis; L-leucine biosynthesis; L-leucine from 3-methyl-2-oxobutanoate: step 1/4. Catalyzes the condensation of the acetyl group of acetyl-CoA with 3-methyl-2-oxobutanoate (2-ketoisovalerate) to form 3-carboxy-3-hydroxy-4-methylpentanoate (2-isopropylmalate). The polypeptide is 2-isopropylmalate synthase (Bacillus thuringiensis subsp. konkukian (strain 97-27)).